A 205-amino-acid chain; its full sequence is Holliday junction branch migration complex subunit RuvA (205 aa).

The interval 1–64 is domain I; the sequence is MIGKLKGILE…EEAIRLFGFV (64 aa). The segment at 65–143 is domain II; sequence AKAEQEWFCL…PFNDNALHFT (79 aa). A flexible linker region spans residues 144-149; sequence PQPHLE. A domain III region spans residues 150–205; sequence VTHQPTNDALSALVKLGFERDQAARALALAMNALEGETVSSALLIRHSLKLLSPST.

This sequence belongs to the RuvA family. As to quaternary structure, homotetramer. Forms an RuvA(8)-RuvB(12)-Holliday junction (HJ) complex. HJ DNA is sandwiched between 2 RuvA tetramers; dsDNA enters through RuvA and exits via RuvB. An RuvB hexamer assembles on each DNA strand where it exits the tetramer. Each RuvB hexamer is contacted by two RuvA subunits (via domain III) on 2 adjacent RuvB subunits; this complex drives branch migration. In the full resolvosome a probable DNA-RuvA(4)-RuvB(12)-RuvC(2) complex forms which resolves the HJ.

Its subcellular location is the cytoplasm. The RuvA-RuvB-RuvC complex processes Holliday junction (HJ) DNA during genetic recombination and DNA repair, while the RuvA-RuvB complex plays an important role in the rescue of blocked DNA replication forks via replication fork reversal (RFR). RuvA specifically binds to HJ cruciform DNA, conferring on it an open structure. The RuvB hexamer acts as an ATP-dependent pump, pulling dsDNA into and through the RuvAB complex. HJ branch migration allows RuvC to scan DNA until it finds its consensus sequence, where it cleaves and resolves the cruciform DNA. The sequence is that of Holliday junction branch migration complex subunit RuvA from Bartonella quintana (strain Toulouse) (Rochalimaea quintana).